The primary structure comprises 145 residues: UPF0102 protein BAV3162 (145 aa).

Belongs to the UPF0102 family.

The protein is UPF0102 protein BAV3162 of Bordetella avium (strain 197N).